We begin with the raw amino-acid sequence, 77 residues long: Conotoxin Cl6.12 (77 aa).

The N-terminal stretch at 1-20 (MKFYLLLTAALLLTAVIIEA) is a signal peptide. Residues 21-36 (APTDHQDEARDLMREE) constitute a propeptide that is removed on maturation. Intrachain disulfides connect Cys43-Cys58, Cys51-Cys62, and Cys57-Cys68.

As to expression, expressed by the venom duct.

The protein resides in the secreted. This is Conotoxin Cl6.12 from Californiconus californicus (California cone).